The primary structure comprises 359 residues: DNA polymerase IV (359 aa).

The 181-residue stretch at 4 to 184 (IVHVDMDAFY…LKVNRIPGVG (181 aa)) folds into the UmuC domain. Residues Asp8 and Asp102 each coordinate Mg(2+). Glu103 is an active-site residue.

This sequence belongs to the DNA polymerase type-Y family. As to quaternary structure, monomer. Mg(2+) serves as cofactor.

Its subcellular location is the cytoplasm. The catalysed reaction is DNA(n) + a 2'-deoxyribonucleoside 5'-triphosphate = DNA(n+1) + diphosphate. Poorly processive, error-prone DNA polymerase involved in untargeted mutagenesis. Copies undamaged DNA at stalled replication forks, which arise in vivo from mismatched or misaligned primer ends. These misaligned primers can be extended by PolIV. Exhibits no 3'-5' exonuclease (proofreading) activity. May be involved in translesional synthesis, in conjunction with the beta clamp from PolIII. This chain is DNA polymerase IV, found in Xanthomonas axonopodis pv. citri (strain 306).